Here is a 133-residue protein sequence, read N- to C-terminus: Profilin-3 (133 aa).

A disulfide bond links C13 and C117. The Involved in PIP2 interaction signature appears at 83 to 99; sequence AVIRGKKGSGGITIKKT. T113 carries the phosphothreonine modification.

This sequence belongs to the profilin family. Occurs in many kinds of cells as a complex with monomeric actin in a 1:1 ratio. Phosphorylated by MAP kinases.

The protein localises to the cytoplasm. Its subcellular location is the cytoskeleton. In terms of biological role, binds to actin and affects the structure of the cytoskeleton. At high concentrations, profilin prevents the polymerization of actin, whereas it enhances it at low concentrations. This is Profilin-3 from Corylus avellana (European hazel).